We begin with the raw amino-acid sequence, 92 residues long: Small ribosomal subunit protein uS19 (92 aa).

The protein belongs to the universal ribosomal protein uS19 family.

Its function is as follows. Protein S19 forms a complex with S13 that binds strongly to the 16S ribosomal RNA. This chain is Small ribosomal subunit protein uS19, found in Brucella ovis (strain ATCC 25840 / 63/290 / NCTC 10512).